A 73-amino-acid polypeptide reads, in one-letter code: MQIKHLITLFFLVLIVADQCSAFFSLIPSLVGGLISAFKGRRKREISAQIEQYKDLQKREAELEKLLDRLPMY.

The N-terminal stretch at 1–22 (MQIKHLITLFFLVLIVADQCSA) is a signal peptide. Residue Lys-39 is modified to Lysine amide. The propeptide occupies 45-73 (EISAQIEQYKDLQKREAELEKLLDRLPMY).

It belongs to the non-disulfide-bridged peptide (NDBP) superfamily. Short antimicrobial peptide (group 4) family. As to expression, expressed by the venom gland.

Its subcellular location is the secreted. Antimicrobial peptide with activity against Gram-positive bacterial strains (S.aureus (MIC=2-140 uM), methicillin-resistant S.aureus (MRSA) (MIC=8-17 uM), S.epidermidis (MIC=1.17 uM), and the yeasts C.albicans, C.krusei, and C.glabrata (MIC=34-69 uM)). Acts by disrupting the cell membrane (observed on outer layer of the S.aureus). Is not active against Gram-negative bacteria (E.coli, E.Cloacae, P.aeruginosa), and the Gram-positive bacterium E.faecalis. Also shows toxicity against several cell lines, but possess low hemolytic activity at the highest concentration tested. Also shows antiparasitic activity against Trypanosoma cruzi by decreasing the viability of the epimastigote and trypomastigote forms of the parasite. Displays high hydroxyl radical scavenging activity (antioxidant action). In a wound infection model, the topical application of this peptide demonstrates antibacterial effects, as well as an ability to accelerate wound closure speed, which suggests the induction of tissue repair. In the model of polymicrobial sepsis, it exhibits an antibiotic effect, reducing the levels of microorganisms in the infectious focus and the inflammatory responses in the lung and cecum of septic animals. This Tityus stigmurus (Brazilian scorpion) protein is Stigmurin.